The following is a 241-amino-acid chain: Thyroid transcription factor 1-associated protein 26 (241 aa).

Disordered regions lie at residues 1-22 (MAPVRRSAKWRPGGIEARGEGV) and 182-205 (KRAAKKQEFERRKQEREEAQRQYK). Positions 186–202 (KKQEFERRKQEREEAQR) are enriched in basic and acidic residues.

It belongs to the TAP26 family. In terms of assembly, interacts with NKX2-1. In terms of tissue distribution, ubiquitously expressed. In lung, expression is restricted to the alveolar epithelial cells.

The protein localises to the nucleus. Functionally, component of the transcription complexes of the pulmonary surfactant-associated protein-B (SFTPB) and -C (SFTPC). Enhances homeobox protein Nkx-2.1-activated SFTPB and SFTPC promoter activities. The polypeptide is Thyroid transcription factor 1-associated protein 26 (CCDC59) (Homo sapiens (Human)).